Here is a 486-residue protein sequence, read N- to C-terminus: Carboxypeptidase Y homolog ARB_07161 (486 aa).

A signal peptide spans 1 to 17 (MKGLLSLLLVGAANALA). N-linked (GlcNAc...) asparagine glycosylation occurs at Asn111. Residue Ser241 is part of the active site. Intrachain disulfides connect Cys281–Cys305, Cys288–Cys298, and Cys327–Cys334. Residue Asp403 is part of the active site. Substrate is bound at residue Cys406. N-linked (GlcNAc...) asparagine glycosylation is present at Asn430. His462 is a catalytic residue.

This sequence belongs to the peptidase S10 family.

Its subcellular location is the secreted. It carries out the reaction Release of a C-terminal amino acid with broad specificity.. Functionally, involved in degradation of small peptides. The polypeptide is Carboxypeptidase Y homolog ARB_07161 (Arthroderma benhamiae (strain ATCC MYA-4681 / CBS 112371) (Trichophyton mentagrophytes)).